The primary structure comprises 250 residues: MAGHSKWANIKHKKARVDEKRGKLFSKLSKEIIVAAKEGGGDPEKNFRLRMAVQKAKENNMPNDNIERAIKKGTGELKGFNYEEISYEGYGPGGVAIFLDAMTDNKNRTASEVRHIFTKNDGNLGEDGCVAWMFDRKGLITIDKEQAENIDEEELMLLTAEAGAEDFKSDNNSIEIVTTPQDFEQVREALENEEVPLSYKEVTMIPSNTVKVEGEEAKKVLQLMEELEDHDDVQNVYANFDIDDSLMETG.

The protein belongs to the TACO1 family.

The protein resides in the cytoplasm. This Natranaerobius thermophilus (strain ATCC BAA-1301 / DSM 18059 / JW/NM-WN-LF) protein is Probable transcriptional regulatory protein Nther_1800.